A 428-amino-acid polypeptide reads, in one-letter code: Enolase (428 aa).

(2R)-2-phosphoglycerate is bound at residue Gln163. Catalysis depends on Glu205, which acts as the Proton donor. Mg(2+) is bound by residues Asp242, Glu286, and Asp313. Positions 338, 367, 368, and 389 each coordinate (2R)-2-phosphoglycerate. Residue Lys338 is the Proton acceptor of the active site.

Belongs to the enolase family. Requires Mg(2+) as cofactor.

It localises to the cytoplasm. It is found in the secreted. Its subcellular location is the cell surface. The enzyme catalyses (2R)-2-phosphoglycerate = phosphoenolpyruvate + H2O. It participates in carbohydrate degradation; glycolysis; pyruvate from D-glyceraldehyde 3-phosphate: step 4/5. Functionally, catalyzes the reversible conversion of 2-phosphoglycerate (2-PG) into phosphoenolpyruvate (PEP). It is essential for the degradation of carbohydrates via glycolysis. The chain is Enolase from Bordetella bronchiseptica (strain ATCC BAA-588 / NCTC 13252 / RB50) (Alcaligenes bronchisepticus).